Reading from the N-terminus, the 303-residue chain is Glutathione transport system permease protein GsiD (303 aa).

The next 6 helical transmembrane spans lie at 40–60 (AMTA…ARWI), 105–125 (LAAG…LGLL), 144–164 (LFAF…GSGI), 165–185 (ANVI…LVRG), 222–242 (IVVF…SLSF), and 266–286 (VIAP…VLAF). The ABC transmembrane type-1 domain maps to 101 to 290 (AQISLAAGVF…LTVLAFNLLG (190 aa)).

It belongs to the binding-protein-dependent transport system permease family. As to quaternary structure, the complex is composed of two ATP-binding proteins (GsiA), two transmembrane proteins (GsiC and GsiD) and a solute-binding protein (GsiB).

It localises to the cell inner membrane. Its function is as follows. Part of the ABC transporter complex GsiABCD involved in glutathione import. Probably responsible for the translocation of the substrate across the membrane. This is Glutathione transport system permease protein GsiD from Shigella dysenteriae serotype 1 (strain Sd197).